The following is a 315-amino-acid chain: Acetyl-coenzyme A carboxylase carboxyl transferase subunit alpha (315 aa).

A CoA carboxyltransferase C-terminal domain is found at 40–293 (LEDKKIALTK…KKNVLAALDR (254 aa)).

The protein belongs to the AccA family. Acetyl-CoA carboxylase is a heterohexamer composed of biotin carboxyl carrier protein (AccB), biotin carboxylase (AccC) and two subunits each of ACCase subunit alpha (AccA) and ACCase subunit beta (AccD).

It localises to the cytoplasm. The enzyme catalyses N(6)-carboxybiotinyl-L-lysyl-[protein] + acetyl-CoA = N(6)-biotinyl-L-lysyl-[protein] + malonyl-CoA. The protein operates within lipid metabolism; malonyl-CoA biosynthesis; malonyl-CoA from acetyl-CoA: step 1/1. Functionally, component of the acetyl coenzyme A carboxylase (ACC) complex. First, biotin carboxylase catalyzes the carboxylation of biotin on its carrier protein (BCCP) and then the CO(2) group is transferred by the carboxyltransferase to acetyl-CoA to form malonyl-CoA. This is Acetyl-coenzyme A carboxylase carboxyl transferase subunit alpha from Marinomonas sp. (strain MWYL1).